We begin with the raw amino-acid sequence, 211 residues long: Calcipressin-like protein (211 aa).

Phosphoserine is present on residues Ser-113 and Ser-117. A Phosphothreonine modification is found at Thr-182.

Belongs to the RCAN family.

Inhibits calcineurin-dependent transcriptional responses by binding to the catalytic domain of calcineurin. This Saccharomyces cerevisiae (strain ATCC 204508 / S288c) (Baker's yeast) protein is Calcipressin-like protein (RCN1).